A 383-amino-acid chain; its full sequence is Omega-6 fatty acid desaturase, endoplasmic reticulum isozyme 2 (383 aa).

Helical transmembrane passes span 61–81 (TIAF…PGPL), 85–105 (GMAI…VIAH), and 117–137 (LLDD…YFSW). The short motif at 105–109 (HECGH) is the Histidine box-1 element. Residues 141-145 (HRRHH) carry the Histidine box-2 motif. The next 3 helical transmembrane spans lie at 179 to 199 (VLTL…LNVS), 225 to 245 (IYIS…LAMA), and 249 to 269 (AWVV…LVLI). Positions 315–319 (HVAHH) match the Histidine box-3 motif.

Belongs to the fatty acid desaturase type 1 family.

It localises to the endoplasmic reticulum membrane. It functions in the pathway lipid metabolism; polyunsaturated fatty acid biosynthesis. ER (microsomal) omega-6 fatty acid desaturase introduces the second double bond in the biosynthesis of 18:3 fatty acids, important constituents of plant membranes. It is thought to use cytochrome b5 as an electron donor and to act on fatty acids esterified to phosphatidylcholine and, possibly, other phospholipids. This Glycine max (Soybean) protein is Omega-6 fatty acid desaturase, endoplasmic reticulum isozyme 2 (FAD2-2).